Consider the following 893-residue polypeptide: Nitrate reductase [NADPH] (893 aa).

The interval 1-83 (MSVTTQQPAV…KPTPDAHVPR (83 aa)) is disordered. The segment covering 55 to 65 (PDFPLPPPANP) has biased composition (pro residues). Residues 71–83 (DIDKPTPDAHVPR) are compositionally biased toward basic and acidic residues. Mo-molybdopterin is bound at residue cysteine 170. A Cytochrome b5 heme-binding domain is found at 536–611 (NRIVELDELK…MPAYHIGTLS (76 aa)). 2 residues coordinate heme: histidine 571 and histidine 594. Residues 641–752 (RTWSKALLSS…KGPIGKFEYL (112 aa)) enclose the FAD-binding FR-type domain. Residues 695–698 (RSYT), 712–716 (LIKIY), 726–728 (KMT), serine 776, and threonine 779 each bind FAD. 863–872 (LVLVCGPEGL) provides a ligand contact to NADP(+).

It belongs to the nitrate reductase family. In terms of assembly, homodimer. Requires FAD as cofactor. Heme is required as a cofactor. It depends on Mo-molybdopterin as a cofactor.

The enzyme catalyses nitrite + NADP(+) + H2O = nitrate + NADPH + H(+). Functionally, nitrate reductase is a key enzyme involved in the first step of nitrate assimilation in plants, fungi and bacteria. In Leptosphaeria maculans (Blackleg fungus), this protein is Nitrate reductase [NADPH] (NIAD).